We begin with the raw amino-acid sequence, 325 residues long: tRNA-dihydrouridine(16) synthase (325 aa).

FMN contacts are provided by residues proline 12–glutamine 14 and glutamine 73. Residue cysteine 103 is the Proton donor of the active site. FMN is bound by residues lysine 144, asparagine 205–glutamate 207, and glycine 229–arginine 230.

Belongs to the Dus family. DusC subfamily. FMN is required as a cofactor.

It catalyses the reaction 5,6-dihydrouridine(16) in tRNA + NADP(+) = uridine(16) in tRNA + NADPH + H(+). It carries out the reaction 5,6-dihydrouridine(16) in tRNA + NAD(+) = uridine(16) in tRNA + NADH + H(+). In terms of biological role, catalyzes the synthesis of 5,6-dihydrouridine (D), a modified base found in the D-loop of most tRNAs, via the reduction of the C5-C6 double bond in target uridines. Specifically modifies U16 in tRNAs. The chain is tRNA-dihydrouridine(16) synthase from Haemophilus ducreyi (strain 35000HP / ATCC 700724).